The sequence spans 533 residues: CTP synthase (533 aa).

The amidoligase domain stretch occupies residues 1–268 (MGETKYIFVT…DETILQKMGL (268 aa)). Residue Ser15 participates in CTP binding. Ser15 provides a ligand contact to UTP. 16 to 21 (SLGKGI) is an ATP binding site. Tyr56 contacts L-glutamine. Residue Asp73 coordinates ATP. Mg(2+)-binding residues include Asp73 and Glu143. Residues 150-152 (DIE), 189-194 (KTKPTQ), and Lys225 each bind CTP. UTP contacts are provided by residues 189–194 (KTKPTQ) and Lys225. The 233-residue stretch at 301-533 (YVELQDAYKS…VSFIKAAIDK (233 aa)) folds into the Glutamine amidotransferase type-1 domain. Gly356 serves as a coordination point for L-glutamine. Cys383 functions as the Nucleophile; for glutamine hydrolysis in the catalytic mechanism. Residues 384-387 (LGMQ), Glu407, and Arg464 contribute to the L-glutamine site. Active-site residues include His509 and Glu511.

It belongs to the CTP synthase family. Homotetramer.

It carries out the reaction UTP + L-glutamine + ATP + H2O = CTP + L-glutamate + ADP + phosphate + 2 H(+). The catalysed reaction is L-glutamine + H2O = L-glutamate + NH4(+). It catalyses the reaction UTP + NH4(+) + ATP = CTP + ADP + phosphate + 2 H(+). The protein operates within pyrimidine metabolism; CTP biosynthesis via de novo pathway; CTP from UDP: step 2/2. Its activity is regulated as follows. Allosterically activated by GTP, when glutamine is the substrate; GTP has no effect on the reaction when ammonia is the substrate. The allosteric effector GTP functions by stabilizing the protein conformation that binds the tetrahedral intermediate(s) formed during glutamine hydrolysis. Inhibited by the product CTP, via allosteric rather than competitive inhibition. Its function is as follows. Catalyzes the ATP-dependent amination of UTP to CTP with either L-glutamine or ammonia as the source of nitrogen. Regulates intracellular CTP levels through interactions with the four ribonucleotide triphosphates. The protein is CTP synthase of Bacteroides fragilis (strain YCH46).